Consider the following 348-residue polypeptide: Phosphate acyltransferase (348 aa).

The protein belongs to the PlsX family. As to quaternary structure, homodimer. Probably interacts with PlsY.

The protein localises to the cytoplasm. The enzyme catalyses a fatty acyl-[ACP] + phosphate = an acyl phosphate + holo-[ACP]. Its pathway is lipid metabolism; phospholipid metabolism. Catalyzes the reversible formation of acyl-phosphate (acyl-PO(4)) from acyl-[acyl-carrier-protein] (acyl-ACP). This enzyme utilizes acyl-ACP as fatty acyl donor, but not acyl-CoA. In Oenococcus oeni (strain ATCC BAA-331 / PSU-1), this protein is Phosphate acyltransferase.